Consider the following 208-residue polypeptide: Histone H1t (208 aa).

The span at 1–16 (MSETVPAASAGAVPAV) shows a compositional bias: low complexity. Residues 1-40 (MSETVPAASAGAVPAVMEKPLTKKRGKKPAGLTSASRKAP) are disordered. Phosphoserine is present on S9. The 74-residue stretch at 40 to 113 (PNLSVSKLIT…GASGSFKLSK (74 aa)) folds into the H15 domain. R58 carries the post-translational modification Citrulline. The disordered stretch occupies residues 102–208 (GTGASGSFKL…ANIRKATSRK (107 aa)). Residues 111 to 136 (LSKKVLPKSTRRKANKSASAKTKKLV) show a composition bias toward basic residues. S143 carries the phosphoserine modification. Residues 148–157 (KTNKRAKKPR) are compositionally biased toward basic residues. Position 159 is a phosphothreonine (T159). A compositionally biased stretch (basic residues) spans 163–175 (KAVRSGRKAKGAK). 2 positions are modified to phosphoserine: S167 and S182. Residues 187–208 (RATKPKLTQHHKANIRKATSRK) are compositionally biased toward basic residues.

This sequence belongs to the histone H1/H5 family. Post-translationally, phosphorylated in early spermatids. Citrullination at Arg-58 (H1R54ci) by PADI4 takes place within the DNA-binding site of H1 and results in its displacement from chromatin and global chromatin decondensation, thereby promoting pluripotency and stem cell maintenance.

Its function is as follows. Testis-specific histone H1 that forms less compacted chromatin compared to other H1 histone subtypes. Formation of more relaxed chromatin may be required to promote chromatin architecture required for proper chromosome regulation during meiosis, such as homologous recombination. Histones H1 act as linkers that bind to nucleosomes and compact polynucleosomes into a higher-order chromatin configuration. In Macaca mulatta (Rhesus macaque), this protein is Histone H1t.